We begin with the raw amino-acid sequence, 502 residues long: Hexokinase-9 (502 aa).

The chain crosses the membrane as a helical span at residues 5-24; it reads AALASAAMAAAAVAVVSTVL. One can recognise a Hexokinase domain in the interval 37–488; that stretch reads RAEAVLLRDL…SGVGAALLAA (452 aa). The hexokinase small subdomain stretch occupies residues 92 to 230; it reads SGGEKGMFYA…GLDMKVTALV (139 aa). ADP contacts are provided by Gly-106, Thr-107, and Asn-108. Thr-196, Lys-197, Asn-231, and Asp-232 together coordinate D-glucose. The interval 231–477 is hexokinase large subdomain; the sequence is NDTVGTLAAG…PSVMIKHVND (247 aa). Thr-255 contacts ADP. Positions 258, 286, and 317 each coordinate D-glucose. ADP is bound at residue Gly-442.

Belongs to the hexokinase family. Expressed in roots, leaves, flowers, immature seeds, endosperm and seed coat.

It localises to the plastid. Its subcellular location is the chloroplast outer membrane. The enzyme catalyses a D-hexose + ATP = a D-hexose 6-phosphate + ADP + H(+). The catalysed reaction is D-fructose + ATP = D-fructose 6-phosphate + ADP + H(+). It catalyses the reaction D-glucose + ATP = D-glucose 6-phosphate + ADP + H(+). The protein operates within carbohydrate metabolism; hexose metabolism. It participates in carbohydrate degradation; glycolysis; D-glyceraldehyde 3-phosphate and glycerone phosphate from D-glucose: step 1/4. In terms of biological role, fructose and glucose phosphorylating enzyme. This Oryza sativa subsp. japonica (Rice) protein is Hexokinase-9 (HXK9).